Here is a 582-residue protein sequence, read N- to C-terminus: Aspartate--tRNA ligase (582 aa).

An L-aspartate-binding site is contributed by Glu174. An aspartate region spans residues 198–201; sequence QITK. Residue Arg220 participates in L-aspartate binding. ATP-binding positions include 220-222 and Gln229; that span reads RDE. His443 lines the L-aspartate pocket. ATP is bound at residue Glu477. An L-aspartate-binding site is contributed by Arg484. 529 to 532 serves as a coordination point for ATP; it reads GLDR.

This sequence belongs to the class-II aminoacyl-tRNA synthetase family. Type 1 subfamily. As to quaternary structure, homodimer.

It localises to the cytoplasm. It carries out the reaction tRNA(Asp) + L-aspartate + ATP = L-aspartyl-tRNA(Asp) + AMP + diphosphate. Functionally, catalyzes the attachment of L-aspartate to tRNA(Asp) in a two-step reaction: L-aspartate is first activated by ATP to form Asp-AMP and then transferred to the acceptor end of tRNA(Asp). This Streptococcus pyogenes serotype M5 (strain Manfredo) protein is Aspartate--tRNA ligase.